The sequence spans 429 residues: Probable M18 family aminopeptidase 2 (429 aa).

Residues histidine 82, histidine 156, and histidine 401 each contribute to the Zn(2+) site.

The protein belongs to the peptidase M18 family. It depends on Zn(2+) as a cofactor.

The sequence is that of Probable M18 family aminopeptidase 2 from Pseudomonas putida (strain GB-1).